Consider the following 809-residue polypeptide: Transitional endoplasmic reticulum ATPase homolog 1 (809 aa).

Residues 1–21 are disordered; that stretch reads MASVPTHQSEKEKKNDELSTA. Residues 8–21 show a composition bias toward basic and acidic residues; it reads QSEKEKKNDELSTA. ATP contacts are provided by residues 253 to 259, N354, H390, and 527 to 532; these read PGTGKTL and GCGKTL. The interval 779 to 809 is disordered; that stretch reads FGNNFKFPGEQRGSDAPSAPVPAQDDDDLYN. Positions 803-809 are interaction with ufd-2; it reads DDDDLYN.

Belongs to the AAA ATPase family. CDC48 subfamily. In terms of assembly, homohexamer; oligomerization is ATP-independent. Forms a ring-shaped particle of 18.3 nm diameter, that displays 6-fold radial symmetry. Interacts with cdc-48.2 and thus may form heterohexamers. Forms a complex composed of cdc-48.1, him-6 and crp-1; within the complex, interacts with helicase him-6 and GTPase crp-1. Forms a complex composed of deubiquitinating enzyme atx-3, adapter ubxn-5 and cdc-48.1; within the complex, interacts (via N-terminus) with ubxn-5 and with atx-3. Forms a complex composed of deubiquitinating enzyme atx-3, E4 ubiquitin-protein ligase ufd-2 and cdc-48.1; within the complex, interacts with atx-3 and (via DDDLYN motif) with ufd-2. Interacts (via N-terminus) with atx-3 (via RRDR motif); the interaction is not required for atx-3 enzymatic activity. Forms a complex composed of cdc-48.1, myosin chaperone unc-45, ubiquitin-protein ligases ufd-2 and chn-1; within the complex, interacts (via DDDLYN motif) with ufd-2 and targets myosin chaperone unc-45 for proteasomal degradation. Forms a complex composed of ubxn-3, ufd-1, npl-4.1 and cdc-48.1; within the complex, interacts (via N-terminus) with ubxn-3 (via FPK motif) and with ufd-1. Forms a complex composed of ubxn-3, cdc-48.1 and/or cdc-48.2 and substrate cdt-1. Interacts (via N-terminus) with ubxn-1. Interacts (via N-terminus) with ubxn-2. Interacts (via N-terminus) with ubxn-4. Interacts with ubxn-6. Interacts with ufd-3. Does not interact with air-2. As to expression, expressed in germ cells and spermatheca. Expressed in body wall muscles.

The protein localises to the cytoplasm. Its subcellular location is the perinuclear region. It carries out the reaction ATP + H2O = ADP + phosphate + H(+). The first ATP-binding region has low ATPase activity. The second ATP-binding region is responsible for ATPase activity. ATP binding to the first ATP-binding region induces intrinsic activity of the second ATP-binding region. While ATP binding to the first ATP-binding region appears to prevent ATP hydrolysis by the second ATP-binding region, ADP-binding to first region promotes the coordinate and cooperative ATPase cycle of the second ATP-binding region. ATP binding to the first ATP-binding region induces a conformational change, promoting the rotation of the first ATP-binding region relative to the second ATP-binding region in the hexamer. Inhibited by N-ethylmaleimide (NEM). Functionally, ATP-dependent chaperone which probably uses the energy provided by ATP hydrolysis to generate mechanical force to unfold substrate proteins, disassemble protein complexes, and disaggregate protein aggregates. Can also prevent aggregation of unfolded proteins also in an ATP-independent manner. Targets polyubiquitinated proteins for proteasomal degradation by binding to 'Lys-48'-linked polyubiquitin chains. Involved in the cytoplasmic elimination of misfolded proteins exported from the ER. This pathway, known as ERAD, prevents the activation of the unfolded protein response (UPR) caused by the accumulation of misfolded proteins in the ER. In association with helicase him-6 and GTPase crp-1, regulates the unfolded protein response (UPR) following ER stress, probably independently of the ERAD pathway. Together with udf-2 and chn-1, regulates myosin assembly in body wall muscles by targeting myosin chaperone unc-45 for proteasomal degradation. Together with the ufd-1-npl-4 complex, controls the switch from spermatogenesis to oogenesis by regulating E3 ligase cul-2 complex-mediated tra-1 proteasomal degradation. During oocyte meiosis and together with cdc-48.2, required for chromosome condensation at the diakinesis phase in prophase I and for progression of metaphase I. During the first embryonic cell division, regulates DNA replication and thus chromosome segregation and decondensation, and nuclear envelope re-assembly. In S phase and in association with ufd-1, npl-4.1 and/or npl-4.2 and ubxn-3, ensures the degradation of DNA licensing factor cdt-1 after the initiation of DNA replication and thus the disassembly of the DNA replication CMG helicase complex by promoting the dissociation from chromatin of several of its components including cdc-45 and sld-5. Regulates ubxn-3 nuclear localization during S phase. During the first embryonic cell divisions and together with cdc-48.2, regulates the re-assembly of the nuclear envelope after mitosis possibly by inactivating kinase air-2, a component of the chromosomal passenger complex (CPC). However, in another study, cdc-48.1 does not appear to be implicated in the regulation of air-2. The polypeptide is Transitional endoplasmic reticulum ATPase homolog 1 (Caenorhabditis elegans).